Here is a 435-residue protein sequence, read N- to C-terminus: Trigger factor (435 aa).

Residues 183–263 (GDFINVDVTI…VKTIWQGNMP (81 aa)) form the PPIase FKBP-type domain.

The protein belongs to the FKBP-type PPIase family. Tig subfamily.

Its subcellular location is the cytoplasm. It carries out the reaction [protein]-peptidylproline (omega=180) = [protein]-peptidylproline (omega=0). Involved in protein export. Acts as a chaperone by maintaining the newly synthesized protein in an open conformation. Functions as a peptidyl-prolyl cis-trans isomerase. The protein is Trigger factor of Protochlamydia amoebophila (strain UWE25).